The following is a 425-amino-acid chain: MSRASSGTATGARLFGISSVLGEYRVLIGDEGAGPSRSPSEVSFSVWYRSRAARLVIVCLVASFLVPCLTFLIAETVMGQTITTPLSLTLDHWSEVRARAHNQGVEVRKKKWITLCEAEWVMMNVGWPREGTFSLDNISQVEKKIFAPGPYGHPDQVPYITTWRSLATDPPSWVRPFLPPPKPPTSLPQPLSPQPSAPLTSSLYPVLPKSDPPKPPVLPPDPSSPLIDLLTEEPPPYPGGHGPPPSGPRTPTASPIASRLRERRENPAEESQALPLREGPNNRPQYWPFSASDLYNWKSHNPPFSQDPVALTNLIESILVTHQPTWDDCQQLLQALLTGEERQRVLLEARKQVPGEDGRPTQLPNVIDETFPLTRPNWDFATPAGREHLRLYRQLLLAGLRGAARRPTNLAQVKQVVQGKEETPA.

The Cytoplasmic segment spans residues 1–54 (MSRASSGTATGARLFGISSVLGEYRVLIGDEGAGPSRSPSEVSFSVWYRSRAAR). Residues 55–75 (LVIVCLVASFLVPCLTFLIAE) form a helical membrane-spanning segment. Residues 76-425 (TVMGQTITTP…VVQGKEETPA (350 aa)) lie on the Extracellular side of the membrane. The N-linked (GlcNAc...) asparagine; by host glycan is linked to Asn-137. A disordered region spans residues 174-285 (VRPFLPPPKP…LREGPNNRPQ (112 aa)). Over residues 177–196 (FLPPPKPPTSLPQPLSPQPS) the composition is skewed to pro residues. The span at 197–209 (APLTSSLYPVLPK) shows a compositional bias: low complexity. 2 stretches are compositionally biased toward pro residues: residues 213–223 (PKPPVLPPDPS) and 233–248 (EPPPYPGGHGPPPSGP).

Post-translationally, glycosylated by host. In terms of processing, cleaved by host near the middle of the molecule, releasing the c-terminal half containing capsid and nucleoprotein domains op GAG.

The protein localises to the host cell membrane. Plays a role in viral particle release. Presumably acts by facilitating the fission of the virion bud at the cell surface. The polypeptide is Glyco-Gag protein (Felidae (cat family)).